An 861-amino-acid chain; its full sequence is MEIGSAGPVGAQPLLMVPRRPGYGTMGKPTKLLANCFQVEIPKIDVYLYEVDIKPDKCPRRVNREVVDSMVQHFKVTIFGDRRPVYDGKRSLYTANPLPVATTGVDLDATLPGEGGKDRPFKVSIKFVSRVSWHLLHEVLTGRTLPEPLELDKPISTNPVHAVDVVLRHLPSMKYTPVGRSFFSAPEGYDHPLGGGREVWFGFHQSVRPAMWKMMLNIDVSATAFYKAQPVIQFMCEVLDIHNIDEQPRPLTDSHRVKSTKEIKGLKVEVTHCGTMRRKYRVCNVTRRPASHQTFPLQLENGQTVERTVAQYFREKYTLQLKYPHLPCLQVGQEQKHTYLPLEVCNIVAGQRCIKKLTDNQTSTMIKATARSAPDRQEEISRLVRSANYETDPFVQEFQFKVRDEMAHVTGRVLPAPMLQYGGRNRTVATPSHGVWDMRGKQFHTGVEIEMWAIACFATQRQCREEILKGFTDQLRKISKDAGMPIQGQPCFCKYAQGADSVEPMFRHLKNTYSGLQLIIVILPGKTPVYAEVKRVGDTLLGMATQCVQVKNVIKTSPQTLSNLCLKINVKLGGINNILVPHQRPSVFQQPVIFLGADVTHPPAGDGKKPSIAAVVGSMDAHPSRYCATVRVQRPRQEIIQDLASMVRELLIQFYKSTRFKPTRIIFYRDGVSEGQFRQVLYYELLAIREACISLEKDYQPGITYIVVQKRHHTRLFCADRTERVGRSGNIPAGTTVDTDITHPYEFDFYLCSHAGIQGTSRPSHYHVLWDDNCFTADELQLLTYQPSAHTYVHCTRSVSIPAPAYYAHLVAFRARYHLVDKERDSAEGSHVSGQSNGRDPQALAKAAQIHQDTLRTMYFA.

Residue Met-1 is modified to N-acetylmethionine. Residues Pro-230–Ala-349 enclose the PAZ domain. Residues Leu-518–Val-820 enclose the Piwi domain. Residues Tyr-530 to Lys-567 are interaction with guide RNA. Asp-598, Glu-638, and Asp-670 together coordinate a divalent metal cation. Residues Gln-758–Tyr-806 form an interaction with guide RNA region. His-809 is a binding site for a divalent metal cation. The disordered stretch occupies residues Arg-824–Ala-847. At Ser-826 the chain carries Phosphoserine.

Belongs to the argonaute family. Ago subfamily. Interacts with EIF4B, IMP8, PRMT5 and TNRC6B. Interacts with APOBEC3F, APOBEC3G and APOBEC3H. Interacts with EDC4. In terms of processing, ubiquitinated on surface-exposed lysines by a SCF-like E3 ubiquitin-protein ligase complex containing ZSWIM8 during target-directed microRNA degradation (TDMD), a process that mediates degradation of microRNAs (miRNAs). Ubiquitination by the SCF-like E3 ubiquitin-protein ligase complex containing ZSWIM8 leads to its subsequent degradation, thereby exposing miRNAs for degradation. ZSWIM8 recognizes and binds AGO3 when it is engaged with a TDMD target.

The protein localises to the cytoplasm. It localises to the P-body. The enzyme catalyses Endonucleolytic cleavage to 5'-phosphomonoester.. Its function is as follows. Required for RNA-mediated gene silencing (RNAi). Binds to short RNAs such as microRNAs (miRNAs) and represses the translation of mRNAs which are complementary to them. Proposed to be involved in stabilization of small RNA derivates (siRNA) derived from processed RNA polymerase III-transcribed Alu repeats containing a DR2 retinoic acid response element (RARE) in stem cells and in the subsequent siRNA-dependent degradation of a subset of RNA polymerase II-transcribed coding mRNAs by recruiting a mRNA decapping complex involving EDC4. Possesses RNA slicer activity but only on select RNAs bearing 5'- and 3'-flanking sequences to the region of guide-target complementarity. This chain is Protein argonaute-3 (AGO3), found in Bos taurus (Bovine).